Here is a 4363-residue protein sequence, read N- to C-terminus: MELNDDPTGKIISGVNDISLPSLSAKQVAQSLSEQLSTSALPAIQSFSFPPLPNGLSETFHDKKMDLSYAFPRKLMSALEVSSMFCAAWAIAVDRYTTNDDVVFGAFLQDIPNPGLVPLRLKTRSETDVGGLLHYVISEITQSCNYPYLGKEKSSELSTERQDSHEVGAMLVFGKSGAGESNVLYEKPITCALTITCTLAGDQLHIGASYDSRVIEAPMLTRVLRQFGYLATQLADANPTRRLTDIAQELNRQDLEDIWKTNMEITTESGALIQEIFAGQAKQRPHAIAVEAWDGVLSYGQLESLSTGLAHALLQLGIKDHSLIPFCLKNSKWAVVAMLGILKANCTFVPIDSSSPWDRRNRILELTHAEVIITSSFMSDDNLWNTSVLCLTEETVSGFPVLSNLPGRISGPGSAAYVLFTSGSTGDPKGVVVAHSAICNSLHAIGSKIGLDETSRTLQFTSLAFDISIFEILGTLIFGGTICVPSEDDRLTRLPEYIVSAQVNTASLTPSVARLYDAAMVPCLNTLILGGEAMTRADIKNWCRLPNLFNGFGPTETAIGCAMHRVHAEQKQHSLIGRLAGIPVWVVDPSDHEVLVPFGAVGELVVEGTTLALGYLDDDIKTQAAFIQDPPWLLRGCGVELPGRRGRIYKTGDLVQYNEEGSLLYVGRKDSDTQVKIRGNRVDLGEIESHLHECLPSRSEVVVDVVLPSDAPTSSDHILAVFLRYEGVNTLQDSTERTIPTKLIQVPEGIQKHLYSKLPAYMVPTVYFSVAVIPKMISGKTDRKRLRGMASLFSMQELAANSSHQTVKRAPDSVIARQLQGIWAQVLHVDPLAIGMDDSFFALGGDSIAAIRLVREARQTFSIGLTVADIFSFPSLGALAAIAKVIPLIDPGPSPAFTSLRGVSSITDLLKDVAESCGLKQPSLIEDVYACTPLQEGLLALSSKHSGTYTVQRVLELAPDVDIARFQAAWETTARCTPIMRTRIVQHVELGLLQAVVDEDIEWKTLPSEQLDSFLLADQKTSMALGQPLMRYALTQGPYSGTHGSRHLVWTVHHALYDGWSLPLLLERVRQAYYGEQPQLSEFAPFIRWCEQDVDEDSAARHWQTYLEEADESALFPPLPPSITEPIEDQQAENRWALPEHGTTAVTRSIVLRAAWAIVASRYTSSNDVLFGTTVSGRGAPVPGIEEMVGPTVATVPTRCKIDDNKSASSFLLEVQQAAVEAIPFEQTGLKRISEIDTRLRRVREIQTFLVVQPAEYGEAAFEGLGKWVNGPGYYRLDVSALTLECVLTESGVRCVAYFDSHVIQAATVTRALAQFAHVSQQLCTASPNTTLGQIDVLTSSDLRDIWNWNGPLLQLAEEPLPHVDIGKQARTRPGAIAVHSWDAQLTYQELDKYSSLLAKQLLDADVKGGDIVPLYFEPSAWVVVAMLAVLKSGAAFTPIDTSQPEQRRNRIVSQLQPSIGLVSARHATTVFGPGWATLEVSRRALSSMPEGPLGQVDASSIAWVIFTSGSTGLPKGAMLQHSAVHTSHRALGATFGLCANTRMLQFSSFAFDACVLEIVATLMHGGCVCIPSELQQRSLSELPSVCAAMEVNTMVLTPTVARLFGPSDFPDLTTLVLTGEPLVQSDVTKWSSIAYVANGYGPAECSNICTVHRIAPDDTDPNRIGSLRGVPNWVVHSRNHHQLTPIGGVGELLIEGATVGHGYLNDAEKTAAAFVTDPAWLTEISHALPCFERHGRLYKTGDIVKLHEDGSLSYLGRKDTQIKIHGQRIELGEIEHHVLHCTKAVEVTVDAVYVPGEEKNKSLVAFVRPSNGTSTPQFYDNPDAIINELANSLPAYMIPTMYIQVPSIPRTASGKTDRKQLREMGTAMASSHAARHWKHQNRPPVTDMEKHVQKLWARVLTLENAGEISLDDSFIRLGGDSIAAMKLVSLAAKAGLGLTVAQIFRHTKLEDQARHVTLLTQGGPAPIAQFSLLPDSPDVKALQADIARAYAIEASSIEDVYPCTPLQEGLLSLSSKPSEYNTYTLQHVFELPPTVDIQQLRSAWEETIRTTDILRTRIVLHPRYGLVQVVVKEEIQWHEPANADVYIETDKQVQMVLGSSLVRYAISPDTGSASRKFIWTIHHALADGWTLDLILRKVKLAYSTLHTVSPVSEFRSFVKYITTRNTDEMVEYWKSTLGGYHSTTFPALPSSVRYAIEDSEVGQKHELPRNITLSAHPLSTLLRAAWAIVQSNYSNTSDVVFGEVFSGRSASVPFIEAIVGPTMATLPVRVKIDDSELAREMLDRLLTTTTQMIPHEQLGLQRISQINTDCQAACSFQTLLVIQPPASTHNGQEEPSLSFSGSPDYRLATYALGIECTPASDGYSFSCRARFDSRVLSAQVAERMMAQLGHVVSQLVAVTASPSSSTLVSDIVLNTPQDLEKLWAWNEAVLELGEEQKHSMLLHQVFRKKALAAPQATAISSWDGECSYAQLEKLSDALAAMLTDLGIGIGLDQQLVPLCFERSMWVVVAMMAVLKTGAGIVPLDPAHPPSRHERILAKVGIGGCILVSPQYAQRQFGEGWTTMVVSEASAAAVPSIHAFDPPTVTHLAVCWILFTSGSTGEPKGIYLEHGAICASYKLLGKTLGIDKETRMLHFSAYAFDIATFEIIGTLMSGGCICIPSDAERLERLPQFCTTFAVNTAILTPSVARLYTPNDIPTLRSLCLAGEAPNKQDISTWQHRIPFLFNCYGPAEAACLAATNRIGPNDADRSATRIGRLRGVPLWITAPGNCRKLAPIGAVGELLIEGSTLARGYLDPTQTDAAFIEDPEWLLQGPAGERSGRRGRLYRTGDLARYDEDGGVVYEGRKDNQVKIRGQRTELGEIEYHLSQCFPTAAEVVVEVATSERDLASVTLVAFVKSRETRDSSEKVPAGIFALPSKLEHEINRRLPLYMIPAVFVSVPEIPKTATDKTDRQKLRELASVYATRAVDAPHHQPQRLPSTVMEETLRDLWLKVIPVRQTAIGLDSNFFRLGGDSIAALKLVGQAQQAGIELSSKDIFLNPKLVDLAACCTDRRCVKEGSRMVAKHATISRFSLLPINASISSIVDEVANACGIPPRLVEDVYPCTPMQEGLMSLSSRNPGTYVSQIAIELAPDVLVDLFKLAWQQTVSTMPILRSRIIQHPKLGFLQAVLKEDVTWNNSTDLDEYLETDSSTPMGFGSELSRHALVWDNSGKHIRFVWTVHHSIYDHVTLRLILDDVYDNYKGNERKDFQPYTSFVRSVISMKSSESEEFWRNACKDEGSSIFPQRSLSIRESCEDTTVEQSYQLCTTATGVTMANVLHAAWAVVSSWHVGNQSIVFGTVLSGRTAPVLGIENIAGPTIATAPFPVIIDPSETISNFLQRIQGQMAAVIPHAQLGLQRISRLSSACELACNFQTLFAVQEGRAMVGNSLGKLLDVNTFSMRTYALTLDCFLDTEGFHVKASFDSRVVDQWRMESILRQFGAVAQQLATKAEGGELVSSIETLNEQGWELLRRWNSHRTHKQWAVFPEDCEKPSPIGAIGELLIEGPDFPSKYLEDPGARKVRSPRWMDRNGHKTVLLTGILVAFDQNGNSIHIGQKRTTISFKGQRIDVSQIERHITSFLAGTEAVVEAIAIPSAENSQSVLAVFLHRPELADRGDNKSRPAICWSKDYGDIEKNLSVVFPDMVPTLYIDMEAMPRTSHGDIDRSQLQTLGSLFPAEKVAILRASRQKRPAVTAMQLAIRGLWASLLGAKEDTFHLDDDFFKSGGDSIGVIKLVGEARKRNIALAAADIFQYPKLESLAVRATENTLSQAEELEEPFSLITSYVDDADRIEDFLSSNILSRIPYAREALQDVLPCTSMQKQLFHAQGQIYRFVLDFGDAQIDAHRLEHAVHGLIDRHAILRTLFVPYQTDLLQVVVSPGKLKGRFVAETLGDGDEIEAAVERVVSADKADTNITGCPMPQFIFLSKRSKTEGFQSKLIIARFSHMQFDGYSVPFVIRDLATLYAATTSNTNTLDADEERTLIVASETLPPAPQFSSYIYAHYSTSSLERRKYWMRLLRASYMTPITVKCDTPERIYNHTRYENRTVELEAWYRIASSGQSSPDDILTMAWALTLSIASEESDIVFGRTVAGRRALFIPHGGADDIMGPCVNTIPVRVQLPSTTEQEEVDKSMTLRDLLAEIHKQTKETLPFESTGLDEIVEHYAPSIWKKKPRRWTSTVVWQDFAGMQAVQHTVHRRSGNHEPNGEEKYEKVGQEDGSVALGYMDPFAASSNVAFADLTCRVTCEIPLFDPADVAVIGRLVDGSPCFALGFAPERVPEPTIKRLADTLMAVVLCLAEHPETSVKHLLRAQRENWRSIRELPNV.

The segment at 278–670 (AGQAKQRPHA…GSLLYVGRKD (393 aa)) is adenylation 1. Residues 810–887 (APDSVIARQL…ALAAIAKVIP (78 aa)) form the Carrier 1 domain. Position 847 is an O-(pantetheine 4'-phosphoryl)serine (S847). A condensation 1 region spans residues 926 to 1340 (EDVYACTPLQ…TLGQIDVLTS (415 aa)). The interval 1368-1765 (KQARTRPGAI…LGRKDTQIKI (398 aa)) is adenylation 2. The Carrier 2 domain occupies 1884–1961 (PPVTDMEKHV…DQARHVTLLT (78 aa)). At S1922 the chain carries O-(pantetheine 4'-phosphoryl)serine. Positions 1999–2410 (EDVYPCTPLQ…ASPSSSTLVS (412 aa)) are condensation 2. Positions 2448 to 2853 (RKKALAAPQA…GRKDNQVKIR (406 aa)) are adenylation 3. The region spanning 2977 to 3053 (LPSTVMEETL…DLAACCTDRR (77 aa)) is the Carrier 3 domain. S3014 carries the post-translational modification O-(pantetheine 4'-phosphoryl)serine. The tract at residues 3098-3503 (VEDVYPCTPM…ELVSSIETLN (406 aa)) is condensation 3. A Carrier 4 domain is found at 3730-3806 (PAVTAMQLAI…SLAVRATENT (77 aa)). The residue at position 3767 (S3767) is an O-(pantetheine 4'-phosphoryl)serine. Residues 3850–4204 (QDVLPCTSMQ…GLDEIVEHYA (355 aa)) are condensation 4.

It belongs to the NRP synthetase family.

It functions in the pathway mycotoxin biosynthesis. Functionally, nonribosomal peptide synthetase; part of the gene clusters that mediate the biosynthesis of AM-toxins, host-selective toxins (HSTs) causing Alternaria blotch on apple, a worldwide distributed disease. AM-toxins are cyclic depsipeptides containing the 3 residues 2-hydroxy-isovaleric acid (2-HIV), dehydroalanine, L-alanine which are common for all 3 AM-toxins I to III. The fourth precursor is L-alpha-amino-methoxyphenyl-valeric acid (L-Amv) for AM-toxin I, L-alpha-amino-phenyl-valeric acid (L-Apv) for AM-toxin II, and L-alpha-amino-hydroxyphenyl-valeric acid (L-Ahv) for AM-toxin III. AM-toxins have two target sites for affecting susceptible apple cells; they cause invagination of the plasma membrane and electrolyte loss, and chloroplast disorganization. The non-ribosomal peptide synthetase AMT1 contains 4 catalytic modules and is responsible for activation of each residue in AM-toxin. The aldo-keto reductase AMT2 catalyzes the conversion of 2-keto-isovaleric acid (2-KIV) to 2-hydroxy-isovaleric acid (2-HIV), one of the precursor residues incorporated by AMT1 during AM-toxin biosynthesis, by reduction of its ketone to an alcohol. The cytochrome P450 monooxygenase AMT3 and the thioesterase AMT4 are also important for AM-toxin production, but their exact function within the AM-toxin biosynthesis are not known yet. Up to 21 proteins (including AMT1 to AMT4) are predicted to be involved in AM-toxin biosynthesis since their expression ishighly up-regulated in AM-toxin-producing cultures. In Alternaria alternata (Alternaria rot fungus), this protein is AM-toxin synthetase AMT1.